The sequence spans 638 residues: Autolysin (638 aa).

Residues 1-28 (MSLATRRFGAAAALLVAACVLCTAPAWA) form the signal peptide. Residues 29–183 (QNETTGTGMV…LKSILKGSQK (155 aa)) constitute a propeptide, activation peptide. Asparagine 30 carries N-linked (GlcNAc...) asparagine glycosylation. Positions 95-102 (PRCNVPRA) match the Cysteine switch motif. Cysteine 97 contacts Zn(2+). N-linked (GlcNAc...) asparagine glycosylation is present at asparagine 126. Residues 269–292 (VTPPPRPPRPPRPPPRAGSTISSL) form a disordered region. Over residues 270–284 (TPPPRPPRPPRPPPR) the composition is skewed to pro residues. Asparagine 296 is a glycosylation site (N-linked (GlcNAc...) asparagine). Zn(2+) is bound at residue histidine 396. Glutamate 397 is an active-site residue. Residues histidine 400 and histidine 406 each contribute to the Zn(2+) site. Residues asparagine 458, asparagine 465, asparagine 470, and asparagine 523 are each glycosylated (N-linked (GlcNAc...) asparagine).

Belongs to the peptidase M11 family. It depends on Zn(2+) as a cofactor. In terms of processing, present in 2 forms: an inactive V-form in vegetative cells and an active and soluble G-form. The V-form enzyme may be converted to the G-form enzyme during gametic differentiation under nitrogen-starved conditions.

The protein localises to the periplasm. Its subcellular location is the secreted. It is found in the cell wall. The enzyme catalyses Cleavage of the proline- and hydroxyproline-rich proteins of the Chlamydomonas cell wall. Also cleaves azocasein, gelatin and Leu-Trp-Met-|-Arg-Phe-Ala.. Functionally, mediates digestion of the cell walls of the 2 mating type gametes during mating as a necessary prelude to cell fusion. This enzyme acts specifically on the framework proteins (inner wall) of the cell wall, cleaving several model peptides at specific sites. This is Autolysin from Chlamydomonas reinhardtii (Chlamydomonas smithii).